An 82-amino-acid chain; its full sequence is Small ribosomal subunit protein bS16 (82 aa).

This sequence belongs to the bacterial ribosomal protein bS16 family.

This is Small ribosomal subunit protein bS16 from Deinococcus deserti (strain DSM 17065 / CIP 109153 / LMG 22923 / VCD115).